The primary structure comprises 485 residues: Aspartyl/glutamyl-tRNA(Asn/Gln) amidotransferase subunit B (485 aa).

It belongs to the GatB/GatE family. GatB subfamily. In terms of assembly, heterotrimer of A, B and C subunits.

It catalyses the reaction L-glutamyl-tRNA(Gln) + L-glutamine + ATP + H2O = L-glutaminyl-tRNA(Gln) + L-glutamate + ADP + phosphate + H(+). The catalysed reaction is L-aspartyl-tRNA(Asn) + L-glutamine + ATP + H2O = L-asparaginyl-tRNA(Asn) + L-glutamate + ADP + phosphate + 2 H(+). Allows the formation of correctly charged Asn-tRNA(Asn) or Gln-tRNA(Gln) through the transamidation of misacylated Asp-tRNA(Asn) or Glu-tRNA(Gln) in organisms which lack either or both of asparaginyl-tRNA or glutaminyl-tRNA synthetases. The reaction takes place in the presence of glutamine and ATP through an activated phospho-Asp-tRNA(Asn) or phospho-Glu-tRNA(Gln). This is Aspartyl/glutamyl-tRNA(Asn/Gln) amidotransferase subunit B from Ruminiclostridium cellulolyticum (strain ATCC 35319 / DSM 5812 / JCM 6584 / H10) (Clostridium cellulolyticum).